Here is a 99-residue protein sequence, read N- to C-terminus: Integration host factor subunit alpha (99 aa).

The disordered stretch occupies residues 49-75; the sequence is FGNFDLRDKNQRPGRNPKTGEDIPITA.

The protein belongs to the bacterial histone-like protein family. Heterodimer of an alpha and a beta chain.

This protein is one of the two subunits of integration host factor, a specific DNA-binding protein that functions in genetic recombination as well as in transcriptional and translational control. This Klebsiella pneumoniae (strain 342) protein is Integration host factor subunit alpha.